The sequence spans 328 residues: 4-hydroxy-3-methylbut-2-enyl diphosphate reductase (328 aa).

Position 13 (Cys-13) interacts with [4Fe-4S] cluster. 2 residues coordinate (2E)-4-hydroxy-3-methylbut-2-enyl diphosphate: His-41 and His-75. The dimethylallyl diphosphate site is built by His-41 and His-75. His-41 and His-75 together coordinate isopentenyl diphosphate. Residue Cys-97 coordinates [4Fe-4S] cluster. A (2E)-4-hydroxy-3-methylbut-2-enyl diphosphate-binding site is contributed by His-125. Dimethylallyl diphosphate is bound at residue His-125. His-125 contributes to the isopentenyl diphosphate binding site. The Proton donor role is filled by Glu-127. Residue Thr-168 participates in (2E)-4-hydroxy-3-methylbut-2-enyl diphosphate binding. Cys-225 serves as a coordination point for [4Fe-4S] cluster. 4 residues coordinate (2E)-4-hydroxy-3-methylbut-2-enyl diphosphate: Ser-253, Ser-254, Asn-255, and Ser-302. Dimethylallyl diphosphate is bound by residues Ser-253, Ser-254, Asn-255, and Ser-302. Isopentenyl diphosphate contacts are provided by Ser-253, Ser-254, Asn-255, and Ser-302.

This sequence belongs to the IspH family. [4Fe-4S] cluster is required as a cofactor.

The enzyme catalyses isopentenyl diphosphate + 2 oxidized [2Fe-2S]-[ferredoxin] + H2O = (2E)-4-hydroxy-3-methylbut-2-enyl diphosphate + 2 reduced [2Fe-2S]-[ferredoxin] + 2 H(+). It catalyses the reaction dimethylallyl diphosphate + 2 oxidized [2Fe-2S]-[ferredoxin] + H2O = (2E)-4-hydroxy-3-methylbut-2-enyl diphosphate + 2 reduced [2Fe-2S]-[ferredoxin] + 2 H(+). It functions in the pathway isoprenoid biosynthesis; dimethylallyl diphosphate biosynthesis; dimethylallyl diphosphate from (2E)-4-hydroxy-3-methylbutenyl diphosphate: step 1/1. The protein operates within isoprenoid biosynthesis; isopentenyl diphosphate biosynthesis via DXP pathway; isopentenyl diphosphate from 1-deoxy-D-xylulose 5-phosphate: step 6/6. Its function is as follows. Catalyzes the conversion of 1-hydroxy-2-methyl-2-(E)-butenyl 4-diphosphate (HMBPP) into a mixture of isopentenyl diphosphate (IPP) and dimethylallyl diphosphate (DMAPP). Acts in the terminal step of the DOXP/MEP pathway for isoprenoid precursor biosynthesis. The protein is 4-hydroxy-3-methylbut-2-enyl diphosphate reductase of Chlorobium chlorochromatii (strain CaD3).